Reading from the N-terminus, the 392-residue chain is MKEFTYLQDELETMKQQGTHQTLKEIDSKQSSTVTLNEQSVIQLSSNNYLGLTSHPRLMKAAKEAIDEFGAGTGSVRTIAGTMTMHERLEKKLAAFKKTEAALVFQSGFTTNQGVLSSILTKDDIVISDELNHASIIDGIRLTKADKKVYGHANMEELEKILKKSMNYRVRLIVTDGVFSMDGDIAPLSEIVRLAEAYDAFVMVDDAHASGVLGENGRGTVNHFKLDGRVHIQVGTLSKAVGVLGGYVAGSAVLIDYLKHKARPFLFSTSHPPAVTRACEEAIEVLLDEPERIETLWENAAYFKEKVIGLGFEVAPTETPIIPMMIGDEALTFRFSKALIERGVFAQGIAFPTVAKGKARIRAIITAEHTKEELDRALTIIEEEAKKLNILD.

Pyridoxal 5'-phosphate is bound at residue glycine 108–phenylalanine 109. Histidine 133 contributes to the substrate binding site. Residues serine 180, aspartate 205 to histidine 208, and threonine 236 to lysine 239 contribute to the pyridoxal 5'-phosphate site. The residue at position 239 (lysine 239) is an N6-(pyridoxal phosphate)lysine. Threonine 353 lines the substrate pocket.

The protein belongs to the class-II pyridoxal-phosphate-dependent aminotransferase family. BioF subfamily. Homodimer. It depends on pyridoxal 5'-phosphate as a cofactor.

It catalyses the reaction 6-carboxyhexanoyl-[ACP] + L-alanine + H(+) = (8S)-8-amino-7-oxononanoate + holo-[ACP] + CO2. Its pathway is cofactor biosynthesis; biotin biosynthesis. Functionally, catalyzes the decarboxylative condensation of pimeloyl-[acyl-carrier protein] and L-alanine to produce 8-amino-7-oxononanoate (AON), [acyl-carrier protein], and carbon dioxide. The sequence is that of 8-amino-7-oxononanoate synthase from Bacillus pumilus (strain SAFR-032).